Reading from the N-terminus, the 240-residue chain is tRNA (guanine-N(1)-)-methyltransferase (240 aa).

Residues Gly-110 and 129–134 (LGDFVL) contribute to the S-adenosyl-L-methionine site.

This sequence belongs to the RNA methyltransferase TrmD family. In terms of assembly, homodimer.

It localises to the cytoplasm. The catalysed reaction is guanosine(37) in tRNA + S-adenosyl-L-methionine = N(1)-methylguanosine(37) in tRNA + S-adenosyl-L-homocysteine + H(+). Functionally, specifically methylates guanosine-37 in various tRNAs. This is tRNA (guanine-N(1)-)-methyltransferase from Clostridium botulinum (strain Loch Maree / Type A3).